The following is a 122-amino-acid chain: Holo-[acyl-carrier-protein] synthase (122 aa).

D5 and E54 together coordinate Mg(2+).

The protein belongs to the P-Pant transferase superfamily. AcpS family. Requires Mg(2+) as cofactor.

Its subcellular location is the cytoplasm. It carries out the reaction apo-[ACP] + CoA = holo-[ACP] + adenosine 3',5'-bisphosphate + H(+). Its function is as follows. Transfers the 4'-phosphopantetheine moiety from coenzyme A to a Ser of acyl-carrier-protein. This Aquifex aeolicus (strain VF5) protein is Holo-[acyl-carrier-protein] synthase.